A 1018-amino-acid polypeptide reads, in one-letter code: Cytadherence high molecular weight protein 1 (1018 aa).

Coiled-coil stretches lie at residues 782–815 (NRFLLIKKELQAELTRLIEENEQLKAEFLNAKDL) and 849–880 (ELVRNIQKAILENESKIKNIQITLKELKAVYK).

Phosphorylated mainly on serine residues.

The protein localises to the cell projection. The protein resides in the attachment organelle membrane. Functionally, component of the cytoskeleton-like structure which stabilizes the shape of the wall-less Mycoplasma. This cytoskeleton-like network of accessory proteins containing HMW proteins 1 to 5 allows the proper anchoring of cytadhesin proteins in the mycoplasmal membrane at the attachment organelle. The sequence is that of Cytadherence high molecular weight protein 1 (hmw1) from Mycoplasma pneumoniae (strain ATCC 29342 / M129 / Subtype 1) (Mycoplasmoides pneumoniae).